The primary structure comprises 372 residues: Partitioning defective 6 homolog beta (372 aa).

Position 11 is a phosphoserine (Ser-11). Residues 16-96 (TMEVKSKFGA…PLLRIFIQKK (81 aa)) form the PB1 domain. The interaction with PARD3 and CDC42 stretch occupies residues 126–253 (RKKPHIVISM…ITVRPANQRN (128 aa)). The region spanning 133–150 (ISMPQDFRPVSSIIDVDI) is the Pseudo-CRIB domain. The PDZ domain occupies 157 to 250 (RVRLYKYGTE…NLIITVRPAN (94 aa)). Positions 253-272 (NNVVRNSRTSGSSGQSTDNS) are enriched in polar residues. The tract at residues 253-292 (NNVVRNSRTSGSSGQSTDNSLLGYPQQIEPSFEPEDEDSE) is disordered.

The protein belongs to the PAR6 family. In terms of assembly, interacts with PARD3. Interacts with GTP-bound forms of CDC42 and RAC1. Interacts with GTP-bound RHOQ/TC10. Interacts with PALS1. Interacts with the N-terminal part of PRKCI and PRKCZ. Part of a complex with PARD3, CDC42 or RAC1 and PRKCI or PRKCZ. Part of a complex with LLGL1 and PRKCI. Interacts with PARD3B. Interacts with ECT2. Expressed in pancreas and in both adult and fetal kidney. Weakly expressed in placenta and lung. Not expressed in other tissues.

The protein resides in the cytoplasm. The protein localises to the cell membrane. It localises to the cell junction. It is found in the tight junction. Functionally, adapter protein involved in asymmetrical cell division and cell polarization processes. Probably involved in formation of epithelial tight junctions. Association with PARD3 may prevent the interaction of PARD3 with F11R/JAM1, thereby preventing tight junction assembly. The PARD6-PARD3 complex links GTP-bound Rho small GTPases to atypical protein kinase C proteins. In Homo sapiens (Human), this protein is Partitioning defective 6 homolog beta (PARD6B).